The following is a 130-amino-acid chain: Small ribosomal subunit protein uS11 (130 aa).

Belongs to the universal ribosomal protein uS11 family. Part of the 30S ribosomal subunit. Interacts with proteins S7 and S18. Binds to IF-3.

Located on the platform of the 30S subunit, it bridges several disparate RNA helices of the 16S rRNA. Forms part of the Shine-Dalgarno cleft in the 70S ribosome. In Kosmotoga olearia (strain ATCC BAA-1733 / DSM 21960 / TBF 19.5.1), this protein is Small ribosomal subunit protein uS11.